A 243-amino-acid chain; its full sequence is MQRALLSSLRRSAGIRSGVNSMRVVRPTVLAPRMSMIRFASTEASKKEGKEDKAEAQGSQEPETAAETNKEAEGAKVEVSEIDELKAKLTKKDRELADMKNHYARAIADFRNLQESTKLEKQKARDFALQKFAKDLLESVDNFDLALNAVKEDTLKNNSEVKNLYDGVDMTRNVFEKTLARHGIEKVDPIGEQFDPNQHEATFEIAQPDKEPGTVFHVQQNGYTLNSRVLRPAKVGVVKDAEN.

The disordered stretch occupies residues 42–75 (TEASKKEGKEDKAEAQGSQEPETAAETNKEAEGA). Over residues 44 to 55 (ASKKEGKEDKAE) the composition is skewed to basic and acidic residues.

The protein belongs to the GrpE family. In terms of assembly, component of the PAM complex, at least composed of mtHsp70, MGE1, TIM44, PAM16, PAM17 and PAM18.

It is found in the mitochondrion matrix. Essential component of the PAM complex, a complex required for the translocation of transit peptide-containing proteins from the inner membrane into the mitochondrial matrix in an ATP-dependent manner. Seems to control the nucleotide-dependent binding of SSC1 to substrate proteins. This chain is GrpE protein homolog, mitochondrial (mge1), found in Debaryomyces hansenii (strain ATCC 36239 / CBS 767 / BCRC 21394 / JCM 1990 / NBRC 0083 / IGC 2968) (Yeast).